The sequence spans 376 residues: UDP-N-acetylglucosamine 2-epimerase (376 aa).

Substrate contacts are provided by residues Arg-10, Lys-15, Asp-95, Glu-117, His-213, Gln-271, Phe-276, 290–292 (SGG), Glu-296, and Arg-313.

The protein belongs to the UDP-N-acetylglucosamine 2-epimerase family. As to quaternary structure, homodimer.

The protein localises to the cytoplasm. The enzyme catalyses UDP-N-acetyl-alpha-D-glucosamine = UDP-N-acetyl-alpha-D-mannosamine. It functions in the pathway bacterial outer membrane biogenesis; enterobacterial common antigen biosynthesis. With respect to regulation, allosterically activated by its substrate, UDP-GlcNAc. In terms of biological role, catalyzes the reversible epimerization at C-2 of UDP-N-acetylglucosamine (UDP-GlcNAc) and thereby provides bacteria with UDP-N-acetylmannosamine (UDP-ManNAc), the activated donor of ManNAc residues. Also involved in bacteriophage N4 adsorption. The polypeptide is UDP-N-acetylglucosamine 2-epimerase (Escherichia coli (strain K12)).